The chain runs to 775 residues: Phenylalanine--tRNA ligase beta subunit (775 aa).

The tRNA-binding domain occupies 39 to 147 (GIDLDGVVFG…EDFKPGTDAN (109 aa)). Residues 394–470 (YKPKKVFLPQ…RVKGYEHYTS (77 aa)) enclose the B5 domain. The Mg(2+) site is built by Asp448, Asp454, Glu457, and Glu458. Residues 681 to 774 (AKFPPVVRDI…LKEKYGVELR (94 aa)) form the FDX-ACB domain.

This sequence belongs to the phenylalanyl-tRNA synthetase beta subunit family. Type 1 subfamily. In terms of assembly, tetramer of two alpha and two beta subunits. It depends on Mg(2+) as a cofactor.

It localises to the cytoplasm. It carries out the reaction tRNA(Phe) + L-phenylalanine + ATP = L-phenylalanyl-tRNA(Phe) + AMP + diphosphate + H(+). This chain is Phenylalanine--tRNA ligase beta subunit (pheT), found in Aquifex aeolicus (strain VF5).